Reading from the N-terminus, the 626-residue chain is Division abnormally delayed protein (626 aa).

Positions 1 to 26 are cleaved as a signal peptide; the sequence is MAARSVRLAQLLLFTLLCGFVGLSAA. Residues 41–52 show a composition bias toward basic residues; the sequence is LHSATTHHRRRL. Residues 41 to 65 form a disordered region; that stretch reads LHSATTHHRRRLQRDSRAKDAVGGS. The N-linked (GlcNAc...) asparagine; atypical glycan is linked to Asn97. N-linked (GlcNAc...) asparagine glycans are attached at residues Asn101, Asn150, and Asn187. The tract at residues 533 to 607 is disordered; sequence NSIQATHDIQ…GKTSGSNPLE (75 aa). Ser549, Ser569, Ser573, and Ser601 each carry an O-linked (Xyl...) (heparan sulfate) serine glycan. Over residues 565–575 the composition is skewed to gly residues; it reads GAHGSGDGSGD. Gly602 carries GPI-anchor amidated glycine lipidation. Positions 603 to 626 are cleaved as a propeptide — removed in mature form; sequence SNPLEGTATWMLLTLVTMLFSSCS.

This sequence belongs to the glypican family. Interacts with nord; the interaction promotes dally degradation. Interacts with Magu. As part of the dally/ Magu complex, associates with fwe (isoforms ubi, LoseA and LoseB) and is unable to interact with fwe independently of Magu.

It is found in the cell membrane. In terms of biological role, cell surface proteoglycan that bears heparan sulfate. Functions as a coreceptor for growth factors and morphogens, such as the products of dpp, to regulate signaling and distribution of these ligands. Required for cell division patterning during postembryonic development of the nervous system. Plays a role in dpp/BMP signaling possibly by stabilizing dpp and thereby creating a morphological gradient during wing development. Might have a role in testis development. Functions with magu and fwe in a mechanism of scaling, which utilises apoptosis to ensure that the dpp patterning gradient remains proportional to the size of the growing wing. In this mechanism, fwe represses dally and Magu-dependent activity in expanding the gradient, and dally/Magu inhibits fwe-dependent apoptosis to keep cell death rate low. When the levels of these different proteins are optimally regulated the gradient correctly scales with organ growth but when this fails, fwe-mediated apoptosis is activated to trim the developing tissue to match the correct size of the gradient. This is Division abnormally delayed protein (dally) from Drosophila melanogaster (Fruit fly).